The primary structure comprises 294 residues: Ribosomal RNA small subunit methyltransferase A (294 aa).

6 residues coordinate S-adenosyl-L-methionine: Asn-29, Val-31, Gly-56, Glu-77, Asp-107, and Asn-126.

Belongs to the class I-like SAM-binding methyltransferase superfamily. rRNA adenine N(6)-methyltransferase family. RsmA subfamily.

It localises to the cytoplasm. The enzyme catalyses adenosine(1518)/adenosine(1519) in 16S rRNA + 4 S-adenosyl-L-methionine = N(6)-dimethyladenosine(1518)/N(6)-dimethyladenosine(1519) in 16S rRNA + 4 S-adenosyl-L-homocysteine + 4 H(+). In terms of biological role, specifically dimethylates two adjacent adenosines (A1518 and A1519) in the loop of a conserved hairpin near the 3'-end of 16S rRNA in the 30S particle. May play a critical role in biogenesis of 30S subunits. In Mycobacterium sp. (strain JLS), this protein is Ribosomal RNA small subunit methyltransferase A.